The primary structure comprises 478 residues: Shikimate biosynthesis protein AroDE (478 aa).

The 3-dehydroquinate dehydratase stretch occupies residues 1–208 (MLCTTISGPS…LKHHYFYNFA (208 aa)). Residues S21, 29–31 (EMR), and 55–57 (AWK) each bind 3-dehydroquinate. H110 acts as the Proton donor/acceptor; for 3-dehydroquinate dehydratase activity in catalysis. Catalysis depends on K133, which acts as the Schiff-base intermediate with substrate; for 3-dehydroquinate dehydratase activity. 2 residues coordinate 3-dehydroquinate: R171 and Q196. The tract at residues 209-478 (SLSAQSPICA…VLASLFSIAP (270 aa)) is shikimate 5-dehydrogenase. Residue 226–228 (SIG) participates in shikimate binding. K277 functions as the Proton acceptor; for shikimate dehydrogenase activity in the catalytic mechanism. Residues N298 and D313 each contribute to the shikimate site. NADP(+) contacts are provided by residues 337–341 (GAGGA), 360–362 (NRT), and G435. Q442 contributes to the shikimate binding site.

This sequence in the N-terminal section; belongs to the type-I 3-dehydroquinase family. The protein in the C-terminal section; belongs to the shikimate dehydrogenase family.

It carries out the reaction 3-dehydroquinate = 3-dehydroshikimate + H2O. The catalysed reaction is shikimate + NADP(+) = 3-dehydroshikimate + NADPH + H(+). The protein operates within metabolic intermediate biosynthesis; chorismate biosynthesis; chorismate from D-erythrose 4-phosphate and phosphoenolpyruvate: step 3/7. It participates in metabolic intermediate biosynthesis; chorismate biosynthesis; chorismate from D-erythrose 4-phosphate and phosphoenolpyruvate: step 4/7. Bifunctional enzyme that catalyzes two sequential steps of the aromatic amino acids biosynthetic pathway. In the first reaction, the AroD domain catalyzes the cis-dehydration of 3-dehydroquinate (DHQ) and introduces the first double bond of the aromatic ring to yield 3-dehydroshikimate; in the second reaction, the AroE domain catalyzes the reversible NADPH linked reduction of 3-dehydroshikimate (DHSA) to yield shikimate (SA). This Chlamydia trachomatis serovar D (strain ATCC VR-885 / DSM 19411 / UW-3/Cx) protein is Shikimate biosynthesis protein AroDE.